We begin with the raw amino-acid sequence, 227 residues long: Peroxiredoxin 1 (227 aa).

Residues 6–161 (PLIGEKFPEM…ILRLIKSLQM (156 aa)) enclose the Thioredoxin domain. Cys-48 (cysteine sulfenic acid (-SOH) intermediate) is an active-site residue. A substrate-binding site is contributed by Arg-124.

This sequence belongs to the peroxiredoxin family. Prx6 subfamily. Homodecamer. Pentamer of dimers that assemble into a ring structure.

Its subcellular location is the cytoplasm. It carries out the reaction a hydroperoxide + [thioredoxin]-dithiol = an alcohol + [thioredoxin]-disulfide + H2O. In terms of biological role, thiol-specific peroxidase that catalyzes the reduction of hydrogen peroxide and organic hydroperoxides to water and alcohols, respectively. Plays a role in cell protection against oxidative stress by detoxifying peroxides. The polypeptide is Peroxiredoxin 1 (Picrophilus torridus (strain ATCC 700027 / DSM 9790 / JCM 10055 / NBRC 100828 / KAW 2/3)).